Here is a 266-residue protein sequence, read N- to C-terminus: NADH dehydrogenase [ubiquinone] iron-sulfur protein 3, mitochondrial (266 aa).

Residues 1–38 constitute a mitochondrion transit peptide; it reads MAAAVAAAARGCWQRLVGSAAPARVAGRPSVLLLPVRR.

It belongs to the complex I 30 kDa subunit family. In terms of assembly, core subunit of respiratory chain NADH dehydrogenase (Complex I) which is composed of 45 different subunits. Interacts with NDUFAF3. Interacts with RAB5IF. Found in subcomplexes containing subunits NDUFS2, MT-ND1 and NDUFA13.

The protein localises to the mitochondrion inner membrane. The enzyme catalyses a ubiquinone + NADH + 5 H(+)(in) = a ubiquinol + NAD(+) + 4 H(+)(out). In terms of biological role, core subunit of the mitochondrial membrane respiratory chain NADH dehydrogenase (Complex I) which catalyzes electron transfer from NADH through the respiratory chain, using ubiquinone as an electron acceptor. Essential for the catalytic activity and assembly of complex I. The chain is NADH dehydrogenase [ubiquinone] iron-sulfur protein 3, mitochondrial (NDUFS3) from Bos taurus (Bovine).